Reading from the N-terminus, the 421-residue chain is Cytochrome c biogenesis protein Ccs1 (421 aa).

The next 3 membrane-spanning stretches (helical) occupy residues Leu12–Ile32, Thr71–Leu91, and Ile157–Ala177.

This sequence belongs to the Ccs1/CcsB family. As to quaternary structure, may interact with CcsA.

It is found in the plastid. The protein resides in the chloroplast thylakoid membrane. In terms of biological role, required during biogenesis of c-type cytochromes (cytochrome c6 and cytochrome f) at the step of heme attachment. This is Cytochrome c biogenesis protein Ccs1 from Trieres chinensis (Marine centric diatom).